Consider the following 482-residue polypeptide: Probable cytochrome P450 508D1 (482 aa).

The helical transmembrane segment at 1–21 threads the bilayer; sequence MVYLKNILIFLIIFLINPLVK. Cys428 provides a ligand contact to heme.

This sequence belongs to the cytochrome P450 family. The cofactor is heme.

The protein localises to the membrane. The sequence is that of Probable cytochrome P450 508D1 (cyp508D1) from Dictyostelium discoideum (Social amoeba).